A 1571-amino-acid polypeptide reads, in one-letter code: Disco-interacting protein 2 homolog A (1571 aa).

One can recognise a DMAP1-binding domain in the interval 9–127 (EAAPLPAEVR…KRRSVLVHSS (119 aa)). A disordered region spans residues 60–203 (LQAENRIPGP…APSAAATPGA (144 aa)). A compositionally biased stretch (basic and acidic residues) spans 86–98 (ASRDERFRSDVHT). The residue at position 94 (S94) is a Phosphoserine. Polar residues-rich tracts occupy residues 127–139 (SVET…TSSA) and 152–162 (LTSTPLQSHSS). A phosphothreonine mark is found at T132 and T155. A compositionally biased stretch (low complexity) spans 174–203 (SSTSSSASSTSSHPGGRPTTAPSAAATPGA). 2 short sequence motifs (PXXP motif; required for interaction with CTTN) span residues 283 to 286 (PKRP) and 307 to 310 (PNQP). The disordered stretch occupies residues 302–327 (VQQPDPNQPKPEGSETSVLRGEPLTA).

Belongs to the DIP2 family. As to quaternary structure, interacts with FSTL1; DIP2A may act as a cell surface receptor for FSTL1. Interacts (via N-terminus) with CTTN (via SH3 domain); the interaction promotes acetylation of CTTN and is required for proper synaptic transmission. Interacts with SHANK3. In terms of tissue distribution, low expression in all tissues tested.

The protein resides in the cell membrane. The protein localises to the mitochondrion. It is found in the cell projection. It localises to the dendritic spine. It catalyses the reaction acetate + ATP + CoA = acetyl-CoA + AMP + diphosphate. In terms of biological role, catalyzes the de novo synthesis of acetyl-CoA in vitro. Promotes acetylation of CTTN, possibly by providing the acetyl donor, ensuring correct dendritic spine morphology and synaptic transmission. Binds to follistatin-related protein FSTL1 and may act as a cell surface receptor for FSTL1, contributing to AKT activation and subsequent FSTL1-induced survival and function of endothelial cells and cardiac myocytes. The polypeptide is Disco-interacting protein 2 homolog A (DIP2A) (Homo sapiens (Human)).